The following is a 673-amino-acid chain: UvrABC system protein B (673 aa).

One can recognise a Helicase ATP-binding domain in the interval 26 to 183; that stretch reads EGLEDGLAHQ…RRLAELQYTR (158 aa). Residue 39 to 46 participates in ATP binding; the sequence is GVTGSGKT. Positions 92–115 match the Beta-hairpin motif; it reads YYDYYQPEAYVPSSDTFIEKDASV. The Helicase C-terminal domain occupies 431–597; it reads QVDDLLSEIR…GLNKKVVDIL (167 aa). The UVR domain occupies 633–668; that stretch reads QQKIHELEGQMMQHAQNLEFEEAAQIRDQLHQLREL.

The protein belongs to the UvrB family. In terms of assembly, forms a heterotetramer with UvrA during the search for lesions. Interacts with UvrC in an incision complex.

Its subcellular location is the cytoplasm. In terms of biological role, the UvrABC repair system catalyzes the recognition and processing of DNA lesions. A damage recognition complex composed of 2 UvrA and 2 UvrB subunits scans DNA for abnormalities. Upon binding of the UvrA(2)B(2) complex to a putative damaged site, the DNA wraps around one UvrB monomer. DNA wrap is dependent on ATP binding by UvrB and probably causes local melting of the DNA helix, facilitating insertion of UvrB beta-hairpin between the DNA strands. Then UvrB probes one DNA strand for the presence of a lesion. If a lesion is found the UvrA subunits dissociate and the UvrB-DNA preincision complex is formed. This complex is subsequently bound by UvrC and the second UvrB is released. If no lesion is found, the DNA wraps around the other UvrB subunit that will check the other stand for damage. This Salmonella agona (strain SL483) protein is UvrABC system protein B.